An 80-amino-acid polypeptide reads, in one-letter code: Protein UL148B (80 aa).

Residues 10–30 form a helical membrane-spanning segment; it reads AICVGLVMGVTVIASCALLVF.

Its subcellular location is the host membrane. The sequence is that of Protein UL148B (UL148B) from Homo sapiens (Human).